A 369-amino-acid polypeptide reads, in one-letter code: MLKPSLPFTSLLFLQLPLLGVGLNTTILTPNGNEDTTADFFLTTMPTDSLSVSTLPLPEVQCFVFNVEYMNCTWNSSSEPQPTNLTLHYWYKNSDNDKVQKCSHYLFSEEITSGCQLQKKEIHLYQTFVVQLQDPREPRRQATQMLKLQNLVIPWAPENLTLHKLSESQLELNWNNRFLNHCLEHLVQYRTDWDHSWTEQSVDYRHKFSLPSVDGQKRYTFRVRSRFNPLCGSAQHWSEWSHPIHWGSNTSKENPFLFALEAVVISVGSMGLIISLLCVYFWLERTMPRIPTLKNLEDLVTEYHGNFSAWSGVSKGLAESLQPDYSERLCLVSEIPPKGGALGEGPGASPCNQHSPYWAPPCYTLKPET.

A signal peptide spans 1-22; that stretch reads MLKPSLPFTSLLFLQLPLLGVG. The Extracellular segment spans residues 23 to 262; the sequence is LNTTILTPNG…ENPFLFALEA (240 aa). 4 N-linked (GlcNAc...) asparagine glycosylation sites follow: asparagine 24, asparagine 71, asparagine 75, and asparagine 84. The cysteines at positions 62 and 72 are disulfide-linked. Cysteines 102 and 115 form a disulfide. Positions 156 to 253 constitute a Fibronectin type-III domain; the sequence is APENLTLHKL…IHWGSNTSKE (98 aa). N-linked (GlcNAc...) asparagine glycosylation occurs at asparagine 159. An intrachain disulfide couples cysteine 182 to cysteine 231. The WSXWS motif signature appears at 237–241; sequence WSEWS. Asparagine 249 is a glycosylation site (N-linked (GlcNAc...) asparagine). Residues 263 to 283 traverse the membrane as a helical segment; sequence VVISVGSMGLIISLLCVYFWL. Residues 284–369 are Cytoplasmic-facing; that stretch reads ERTMPRIPTL…PPCYTLKPET (86 aa). Residues 286 to 294 carry the Box 1 motif motif; sequence TMPRIPTLK. A Phosphothreonine modification is found at threonine 292.

The protein belongs to the type I cytokine receptor family. Type 5 subfamily. The gamma subunit is common to the IL2, IL4, IL7, IL15, IL21 and probably also the IL13 receptors. Interacts with SHB upon interleukin stimulation. Interacts with IL9. As to quaternary structure, (Microbial infection) Interacts with HTLV-1 accessory protein p12I.

The protein localises to the cell membrane. Its subcellular location is the cell surface. Its function is as follows. Common subunit for the receptors for a variety of interleukins. Probably in association with IL15RA, involved in the stimulation of neutrophil phagocytosis by IL15. This chain is Cytokine receptor common subunit gamma (IL2RG), found in Homo sapiens (Human).